The chain runs to 159 residues: Growth arrest and DNA damage-inducible protein GADD45 gamma (159 aa).

Residues 43-86 (VYESAKVLNVDPDNVTFCVLAADEEDEGDIALQIHFTLIQAFCC) form a homodimerization region.

Belongs to the GADD45 family. As to quaternary structure, undergoes concentration-dependent homodimerization, which is required for growth inhibititory activity and enhances interaction with PCNA. Interacts with GADD45GIP1. Interacts with PCNA.

In terms of biological role, involved in the regulation of growth and apoptosis. Mediates activation of stress-responsive MTK1/MEKK4 MAPKKK. This Mus musculus (Mouse) protein is Growth arrest and DNA damage-inducible protein GADD45 gamma (Gadd45g).